Consider the following 268-residue polypeptide: Adenosylcobinamide-GDP ribazoletransferase (268 aa).

The next 8 helical transmembrane spans lie at 1–21 (MAGN…TLPV), 36–56 (YLFI…GTLF), 59–79 (ILPA…LTGI), 112–132 (AGGL…AMTF), 138–158 (WLFV…ITII), 182–202 (LAAV…AAII), 212–232 (IMAG…ILII), and 244–264 (VIGA…GAVL).

Belongs to the CobS family. Mg(2+) serves as cofactor.

It localises to the cell membrane. The enzyme catalyses alpha-ribazole + adenosylcob(III)inamide-GDP = adenosylcob(III)alamin + GMP + H(+). It carries out the reaction alpha-ribazole 5'-phosphate + adenosylcob(III)inamide-GDP = adenosylcob(III)alamin 5'-phosphate + GMP + H(+). The protein operates within cofactor biosynthesis; adenosylcobalamin biosynthesis; adenosylcobalamin from cob(II)yrinate a,c-diamide: step 7/7. Joins adenosylcobinamide-GDP and alpha-ribazole to generate adenosylcobalamin (Ado-cobalamin). Also synthesizes adenosylcobalamin 5'-phosphate from adenosylcobinamide-GDP and alpha-ribazole 5'-phosphate. In Methanocella arvoryzae (strain DSM 22066 / NBRC 105507 / MRE50), this protein is Adenosylcobinamide-GDP ribazoletransferase.